Reading from the N-terminus, the 369-residue chain is MAQTLVVKIGTSSLAGGKEGNLALATIAQLVEVLCHCQRRGDRVVLVSSGAVGVGAMRLGLTERPQQLAQKQAVAAVGQGHLMRMYDDLFAVLRQPIAQILVTRQNFVDRQSYLNIYNTFQALFELGVIPIVNENDTVAVDELKFGDNDTLSALVASLVEADWLFLLTDVDRLYSADPRIDKTAVPIERVVSLAELAQTIQVGSAGSPWGTGGMATKIRAAEIATEAGVRTVITDGRSPTNLLKILGGEALGTHFEPRPKTINARKRWIARALIPKGELWLDEGAVKAITVGGKSLLAAGITRVEGEFQAQDAVKLCDPTGAEIARGLVNYNSEEIRRVQGQQSTELANILGYAGADTIVHRDNLVVTL.

Lysine 8 contacts ATP. 3 residues coordinate substrate: serine 49, aspartate 136, and asparagine 148. ATP-binding positions include 168 to 169 and 211 to 217; these read TD and TGGMATK. A PUA domain is found at 276–354; that stretch reads KGELWLDEGA…TELANILGYA (79 aa).

Belongs to the glutamate 5-kinase family.

The protein localises to the cytoplasm. It carries out the reaction L-glutamate + ATP = L-glutamyl 5-phosphate + ADP. It functions in the pathway amino-acid biosynthesis; L-proline biosynthesis; L-glutamate 5-semialdehyde from L-glutamate: step 1/2. Catalyzes the transfer of a phosphate group to glutamate to form L-glutamate 5-phosphate. This Thermosynechococcus vestitus (strain NIES-2133 / IAM M-273 / BP-1) protein is Glutamate 5-kinase.